The sequence spans 301 residues: Glycine--tRNA ligase alpha subunit (301 aa).

This sequence belongs to the class-II aminoacyl-tRNA synthetase family. In terms of assembly, tetramer of two alpha and two beta subunits.

It localises to the cytoplasm. It catalyses the reaction tRNA(Gly) + glycine + ATP = glycyl-tRNA(Gly) + AMP + diphosphate. The protein is Glycine--tRNA ligase alpha subunit of Campylobacter hominis (strain ATCC BAA-381 / DSM 21671 / CCUG 45161 / LMG 19568 / NCTC 13146 / CH001A).